A 331-amino-acid chain; its full sequence is Phosphoenolpyruvate transferase (331 aa).

Asp-63 is a binding site for 7,8-didemethyl-8-hydroxy-5-deazariboflavin.

The protein belongs to the CofD family. Homodimer. Requires Mg(2+) as cofactor.

The catalysed reaction is enolpyruvoyl-2-diphospho-5'-guanosine + 7,8-didemethyl-8-hydroxy-5-deazariboflavin = dehydro coenzyme F420-0 + GMP + H(+). Its pathway is cofactor biosynthesis; coenzyme F420 biosynthesis. In terms of biological role, catalyzes the transfer of the phosphoenolpyruvate moiety from enoylpyruvoyl-2-diphospho-5'-guanosine (EPPG) to 7,8-didemethyl-8-hydroxy-5-deazariboflavin (FO) with the formation of dehydro coenzyme F420-0 and GMP. The sequence is that of Phosphoenolpyruvate transferase from Mycobacterium sp. (strain JLS).